We begin with the raw amino-acid sequence, 157 residues long: 2-C-methyl-D-erythritol 2,4-cyclodiphosphate synthase (157 aa).

Residues D8 and H10 each coordinate a divalent metal cation. 4-CDP-2-C-methyl-D-erythritol 2-phosphate is bound by residues D8 to H10 and H34 to S35. H42 is a binding site for a divalent metal cation. 4-CDP-2-C-methyl-D-erythritol 2-phosphate is bound by residues D56 to G58, F61 to D65, T132 to E135, and F139.

Belongs to the IspF family. Homotrimer. A divalent metal cation is required as a cofactor.

The enzyme catalyses 4-CDP-2-C-methyl-D-erythritol 2-phosphate = 2-C-methyl-D-erythritol 2,4-cyclic diphosphate + CMP. It functions in the pathway isoprenoid biosynthesis; isopentenyl diphosphate biosynthesis via DXP pathway; isopentenyl diphosphate from 1-deoxy-D-xylulose 5-phosphate: step 4/6. Involved in the biosynthesis of isopentenyl diphosphate (IPP) and dimethylallyl diphosphate (DMAPP), two major building blocks of isoprenoid compounds. Catalyzes the conversion of 4-diphosphocytidyl-2-C-methyl-D-erythritol 2-phosphate (CDP-ME2P) to 2-C-methyl-D-erythritol 2,4-cyclodiphosphate (ME-CPP) with a corresponding release of cytidine 5-monophosphate (CMP). This Clostridium botulinum (strain Alaska E43 / Type E3) protein is 2-C-methyl-D-erythritol 2,4-cyclodiphosphate synthase.